The chain runs to 55 residues: Beta-toxin Cn7 (55 aa).

In terms of domain architecture, LCN-type CS-alpha/beta spans 1–55; that stretch reads KEGYIVNYHDGCKYECYKLGDNDYCLRECKLRVGKGAGGYCYAFACWCTHLYEQA. Disulfide bonds link Cys-16–Cys-41, Cys-25–Cys-46, and Cys-29–Cys-48.

Belongs to the long (3 C-C) scorpion toxin superfamily. Sodium channel inhibitor family. Beta subfamily. In terms of tissue distribution, expressed by the venom gland.

Its subcellular location is the secreted. Its function is as follows. Beta toxins bind voltage-independently at site-4 of sodium channels (Nav) and shift the voltage of activation toward more negative potentials thereby affecting sodium channel activation and promoting spontaneous and repetitive firing. The protein is Beta-toxin Cn7 of Centruroides noxius (Mexican scorpion).